We begin with the raw amino-acid sequence, 601 residues long: Serine/threonine-protein phosphatase 2A 65 kDa regulatory subunit A beta isoform (601 aa).

N-acetylalanine is present on Ala-2. HEAT repeat units follow at residues 20 to 58 (DSLY…GVER), 59 to 96 (TRTE…GGPD), 97 to 135 (FAHC…TPVA), 136 to 173 (LEAH…ASNA), 174 to 212 (VKAE…ELDS), 213 to 251 (VKTE…SQDD), 252 to 290 (LEAL…GPKI), 291 to 333 (ALSD…RETV), 334 to 372 (IMNQ…GKEN), 373 to 411 (TIEH…GIRQ), 412 to 450 (LSQS…GVEF), 451 to 489 (FDEK…GTEW), 490 to 528 (AQNT…GKEI), 529 to 567 (TTKQ…DTNA), and 568 to 601 (LQGE…LALA).

Belongs to the phosphatase 2A regulatory subunit A family. In terms of assembly, PP2A consists of a common heterodimeric core enzyme, composed of a 36 kDa catalytic subunit (subunit C) and a 65 kDa constant regulatory subunit (PR65 or subunit A), that associates with a variety of regulatory subunits. Proteins that associate with the core dimer include three families of regulatory subunits B (the R2/B/PR55/B55, R3/B''/PR72/PR130/PR59 and R5/B'/B56 families), the 48 kDa variable regulatory subunit, viral proteins, and cell signaling molecules. Interacts with IPO9. Interacts with SGO1. Interacts with RAF1.

In terms of biological role, the PR65 subunit of protein phosphatase 2A serves as a scaffolding molecule to coordinate the assembly of the catalytic subunit and a variable regulatory B subunit. The polypeptide is Serine/threonine-protein phosphatase 2A 65 kDa regulatory subunit A beta isoform (Ppp2r1b) (Rattus norvegicus (Rat)).